The sequence spans 349 residues: UDP-3-O-acylglucosamine N-acyltransferase (349 aa).

The Proton acceptor role is filled by His-248.

The protein belongs to the transferase hexapeptide repeat family. LpxD subfamily. In terms of assembly, homotrimer.

The enzyme catalyses a UDP-3-O-[(3R)-3-hydroxyacyl]-alpha-D-glucosamine + a (3R)-hydroxyacyl-[ACP] = a UDP-2-N,3-O-bis[(3R)-3-hydroxyacyl]-alpha-D-glucosamine + holo-[ACP] + H(+). The protein operates within bacterial outer membrane biogenesis; LPS lipid A biosynthesis. Catalyzes the N-acylation of UDP-3-O-acylglucosamine using 3-hydroxyacyl-ACP as the acyl donor. Is involved in the biosynthesis of lipid A, a phosphorylated glycolipid that anchors the lipopolysaccharide to the outer membrane of the cell. This Gloeothece citriformis (strain PCC 7424) (Cyanothece sp. (strain PCC 7424)) protein is UDP-3-O-acylglucosamine N-acyltransferase.